A 294-amino-acid chain; its full sequence is MNRSDGLVRRSVKPRENGGAEGGLNANTPDDNQDALDNLKDQEDNIDDGDSKETRLTLMEEVLLLGLKDKEGYTSFWNDCISSGLRGCILIELGLRGRVMIEKSGMRRRGLCTRKLILKSDQQTGDVLLDEALKHIKETDPPETVQSWIEYLSGETWNPLKLRYQLKNVRERLAKNLVEKGVLTTEKQNFLLFDMTTHPLSDNVVKCRLVKKIQDSVLSKWVNDPQRMDKRMLALIFLAHASDVIENAFAPLNDDDYEVAMKRVRELLDLDFEAESAKPNANEILWAVFMAFTK.

The tract at residues 1 to 52 (MNRSDGLVRRSVKPRENGGAEGGLNANTPDDNQDALDNLKDQEDNIDDGDSK) is disordered. Residues 37-52 (DNLKDQEDNIDDGDSK) show a composition bias toward basic and acidic residues. 4 residues coordinate a 1,2-diacyl-sn-glycero-3-phospho-(1D-myo-inositol 4-phosphate): Trp77, Arg86, Lys167, and Arg170. Residues 186 to 197 (EKQNFLLFDMTT) are beta-hairpin required for oligomerization.

This sequence belongs to the GOLPH3/VPS74 family. In terms of assembly, homooligomer. Interacts with botv, Ext2 and ttv. Interacts with Vti1. Interacts with Vps35, Rab5, Chc, Rab11, zip, Pav and Septin1.

Its subcellular location is the golgi apparatus membrane. It localises to the cytoplasmic vesicle. It is found in the cleavage furrow. Functionally, phosphatidylinositol-4-phosphate-binding protein that links Golgi membranes to the cytoskeleton and may participate in the tensile force required for vesicle budding from the Golgi. Thereby, may play a role in Golgi membrane trafficking and could indirectly give its flattened shape to the Golgi apparatus. May also bind to the coatomer to regulate Golgi membrane trafficking. May play a role in anterograde transport from the Golgi to the plasma membrane and regulate secretion. Also involved in the control of the localization of Golgi enzymes through interaction with their cytoplasmic part. Functions in cytokinesis by regulating contractile ring formation and vesicle trafficking during cleavage furrow ingression. May also have a role in the intital steps of central spindle formation. Can also bind phosphatidylinositol-3-phosphate and phosphatidylinositol-5-phosphate in vitro. This chain is Golgi phosphoprotein 3 homolog sauron, found in Drosophila melanogaster (Fruit fly).